The following is a 380-amino-acid chain: Endo-chitosanase C (380 aa).

The first 22 residues, 1–22 (MPIKSFASRLALSLAICGTAMG), serve as a signal peptide directing secretion. One copy of the R3-1 repeat lies at 276–304 (CSWPGHCAGATCSSNDDCSDDLTCQNGKC). The R3-2 repeat unit spans residues 311–341 (ETCSWEGHCKGATCSSNDDCSDELACISGIC). One copy of the R3-3 repeat lies at 348–378 (ETCEWEGHCEGASCSSHDDCDGNLACKNGKC).

The protein belongs to the glycosyl hydrolase 75 family.

Its subcellular location is the secreted. The catalysed reaction is Endohydrolysis of beta-(1-&gt;4)-linkages between D-glucosamine residues in a partly acetylated chitosan.. Its function is as follows. Chitosanase catalyzing the endo-type cleavage of chitosan, the deacylated form of chitin. Chitosanase may be crucial in the degradation of the deacetylated portion of chitin in the fungal cell wall. Chitoolisaccharides produced by the hydrolysis of partially N-acetylated chitosan are known to have many biological activities, including antibacterial activity, immune-enhancing effects, and elicitor activity. The polypeptide is Endo-chitosanase C (csnC) (Aspergillus oryzae (Yellow koji mold)).